A 356-amino-acid polypeptide reads, in one-letter code: Tyrosine recombinase XerS (356 aa).

In terms of domain architecture, Core-binding (CB) spans Ile-16 to Thr-121. A Tyr recombinase domain is found at Ala-169–Asp-354. Catalysis depends on residues Arg-210, Lys-234, His-306, Arg-309, and His-332. Tyr-341 acts as the O-(3'-phospho-DNA)-tyrosine intermediate in catalysis.

It belongs to the 'phage' integrase family. XerS subfamily.

It is found in the cytoplasm. With respect to regulation, ftsK is required for recombination. Site-specific tyrosine recombinase, which acts by catalyzing the cutting and rejoining of the recombining DNA molecules. Essential to convert dimers of the bacterial chromosome into monomers to permit their segregation at cell division. The sequence is that of Tyrosine recombinase XerS from Streptococcus equi subsp. zooepidemicus (strain H70).